Consider the following 126-residue polypeptide: Holo-[acyl-carrier-protein] synthase (126 aa).

Residues Asp9 and Glu58 each contribute to the Mg(2+) site.

This sequence belongs to the P-Pant transferase superfamily. AcpS family. Mg(2+) serves as cofactor.

The protein resides in the cytoplasm. It catalyses the reaction apo-[ACP] + CoA = holo-[ACP] + adenosine 3',5'-bisphosphate + H(+). Its function is as follows. Transfers the 4'-phosphopantetheine moiety from coenzyme A to a Ser of acyl-carrier-protein. This is Holo-[acyl-carrier-protein] synthase from Klebsiella pneumoniae subsp. pneumoniae (strain ATCC 700721 / MGH 78578).